A 451-amino-acid polypeptide reads, in one-letter code: 1,3-beta-glucanosyltransferase PGA4 (451 aa).

An N-terminal signal peptide occupies residues 1–18 (MLFRSLVTYLSLVSSVLS). Tyr81 is a binding site for (1,3-beta-D-glucosyl)n. An N-linked (GlcNAc...) asparagine glycan is attached at Asn88. Residues 108-116 (NTPHSSITR), Asn151, Glu152, and Arg198 each bind (1,3-beta-D-glucosyl)n. Glu152 acts as the Proton donor in catalysis. Residue Asn245 is glycosylated (N-linked (GlcNAc...) asparagine). The active-site Nucleophile is the Glu254. Residue Tyr286 coordinates (1,3-beta-D-glucosyl)n. Residues 316 to 336 (SQFEKTKNPSGDGGYLKSTGG) form a disordered region. N-linked (GlcNAc...) asparagine glycosylation is found at Asn347, Asn394, and Asn422. The disordered stretch occupies residues 395 to 427 (YTSSITASSRASPSQTSQVSSSSATSANSTSSK). The span at 396–426 (TSSITASSRASPSQTSQVSSSSATSANSTSS) shows a compositional bias: low complexity. The GPI-anchor amidated aspartate moiety is linked to residue Asp430. Residues 431–451 (AAVEGAGFLSVIALAAGIALL) constitute a propeptide, removed in mature form.

Belongs to the glycosyl hydrolase 72 family. In terms of processing, the GPI-anchor is attached to the protein in the endoplasmic reticulum and serves to target the protein to the cell surface. There, the glucosamine-inositol phospholipid moiety is cleaved off and the GPI-modified mannoprotein is covalently attached via its lipidless GPI glycan remnant to the 1,6-beta-glucan of the outer cell wall layer.

It is found in the secreted. The protein resides in the cell wall. It localises to the membrane. Its function is as follows. Splits internally a 1,3-beta-glucan molecule and transfers the newly generated reducing end (the donor) to the non-reducing end of another 1,3-beta-glucan molecule (the acceptor) forming a 1,3-beta linkage, resulting in the elongation of 1,3-beta-glucan chains in the cell wall. Involved in cell wall biosynthesis and morphogenesis. Plays a key role in virulence. This is 1,3-beta-glucanosyltransferase PGA4 (PGA4) from Candida albicans (strain SC5314 / ATCC MYA-2876) (Yeast).